The following is a 999-amino-acid chain: Helicase required for RNAi-mediated heterochromatin assembly 1 (999 aa).

Residues 61–90 (EQIETSETSKTQDSEGNKVDKNLKENKSIR) form a disordered region. Residues 70–88 (KTQDSEGNKVDKNLKENKS) are compositionally biased toward basic and acidic residues. Position 94 is a phosphoserine (Ser-94). Residues 106–124 (RNDITSGKNREFENEHHPA) are compositionally biased toward basic and acidic residues. Residues 106–131 (RNDITSGKNREFENEHHPASDTSSWR) form a disordered region. Residue 393 to 400 (GPPGTGKS) coordinates ATP.

As to quaternary structure, cid12, hrr1 and rdp1 interact forming the RNA-directed RNA polymerase complex (RDRC). The RDRC complex interacts with the RITS complex via interaction between ago1 and hrr1. Clr4 has a role in mediating this interaction.

The protein localises to the cytoplasm. Its subcellular location is the nucleus. The catalysed reaction is ATP + H2O = ADP + phosphate + H(+). Has a role in the RNA interference (RNAi) pathway which is important for heterochromatin formation and accurate chromosome segregation. A member of the RNA-directed RNA polymerase complex (RDRC) which is involved in the generation of small interfering RNAs (siRNAs) and mediate their association with the RNA-induced transcriptional silencing (RITS) complex. RITS acts as a priming complex for dsRNA synthesis at the site of non-coding centromeric RNA. The sequence is that of Helicase required for RNAi-mediated heterochromatin assembly 1 (hrr1) from Schizosaccharomyces pombe (strain 972 / ATCC 24843) (Fission yeast).